The chain runs to 460 residues: tRNA modification GTPase MnmE (460 aa).

(6S)-5-formyl-5,6,7,8-tetrahydrofolate is bound by residues R22, E83, and K122. Positions 219-381 (GIKTLIIGRP…LQQTILKKFQ (163 aa)) constitute a TrmE-type G domain. N229 is a K(+) binding site. Residues 229–234 (NVGKSS), 248–254 (SDISGTT), and 273–276 (DTAG) each bind GTP. S233 is a Mg(2+) binding site. The K(+) site is built by S248, I250, and T253. T254 is a Mg(2+) binding site. K460 contacts (6S)-5-formyl-5,6,7,8-tetrahydrofolate.

It belongs to the TRAFAC class TrmE-Era-EngA-EngB-Septin-like GTPase superfamily. TrmE GTPase family. Homodimer. Heterotetramer of two MnmE and two MnmG subunits. Requires K(+) as cofactor.

It is found in the cytoplasm. Functionally, exhibits a very high intrinsic GTPase hydrolysis rate. Involved in the addition of a carboxymethylaminomethyl (cmnm) group at the wobble position (U34) of certain tRNAs, forming tRNA-cmnm(5)s(2)U34. This chain is tRNA modification GTPase MnmE, found in Aster yellows witches'-broom phytoplasma (strain AYWB).